The sequence spans 338 residues: LIX1-like protein (338 aa).

The disordered stretch occupies residues 1–65; sequence METMRAQRLQ…LLLAGAPGLP (65 aa). Positions 29 to 38 are enriched in low complexity; that stretch reads TGAPTSAATP. Residues 39 to 56 are compositionally biased toward pro residues; it reads PAGPPPAPPPPAPPPPPL.

It belongs to the LIX1 family.

This Rattus norvegicus (Rat) protein is LIX1-like protein (Lix1l).